Here is a 508-residue protein sequence, read N- to C-terminus: Endo-4-O-sulfatase (508 aa).

Serine 84 bears the 3-oxoalanine (Ser) mark.

This sequence belongs to the sulfatase family. In terms of processing, the conversion to 3-oxoalanine (also known as C-formylglycine, FGly), of a serine or cysteine residue in prokaryotes and of a cysteine residue in eukaryotes, is critical for catalytic activity.

Its function is as follows. Endosulfatase involved in the degradation of the glycosaminoglycans (GAGs) chondroitin sulfate (CS) and dermatan sulfate (DS). Efficiently hydrolyzes sulfate groups from a broad range of substrate size, including disaccharide to high molecular weight CS and DS polymers. Has a strict specificity for the 4-O-sulfate groups of galactosamine. GAG-specific sulfatases play a key role in the persistence of the major human gut symbiont B.thetaiotaomicron in the host gastrointestinal tract. This is Endo-4-O-sulfatase from Bacteroides thetaiotaomicron (strain ATCC 29148 / DSM 2079 / JCM 5827 / CCUG 10774 / NCTC 10582 / VPI-5482 / E50).